A 475-amino-acid chain; its full sequence is Isocitrate dehydrogenase [NADP] (475 aa).

Position 104 (threonine 104) interacts with NADP(+). Serine 113, asparagine 115, arginine 119, arginine 129, and arginine 153 together coordinate D-threo-isocitrate. Mg(2+) is bound at residue aspartate 362. NADP(+) contacts are provided by residues 394-400 (HGTAPKH), asparagine 407, tyrosine 446, and arginine 450.

It belongs to the isocitrate and isopropylmalate dehydrogenases family. Homodimer. It depends on Mg(2+) as a cofactor. The cofactor is Mn(2+).

It is found in the cytoplasm. It carries out the reaction D-threo-isocitrate + NADP(+) = 2-oxoglutarate + CO2 + NADPH. Its activity is regulated as follows. Inhibited non-competitively by ADP and 2-oxoglutarate, with respect to isocitrate and in a competitive manner by NADPH. Catalyzes the oxidative decarboxylation of isocitrate to 2-oxoglutarate and carbon dioxide with the concomitant reduction of NADP(+). Is specific for NADP(+), cannot use NAD(+). This is Isocitrate dehydrogenase [NADP] from Synechocystis sp. (strain ATCC 27184 / PCC 6803 / Kazusa).